The primary structure comprises 182 residues: Adenine phosphoribosyltransferase (182 aa).

The protein belongs to the purine/pyrimidine phosphoribosyltransferase family. As to quaternary structure, homodimer.

The protein localises to the cytoplasm. The catalysed reaction is AMP + diphosphate = 5-phospho-alpha-D-ribose 1-diphosphate + adenine. It functions in the pathway purine metabolism; AMP biosynthesis via salvage pathway; AMP from adenine: step 1/1. Catalyzes a salvage reaction resulting in the formation of AMP, that is energically less costly than de novo synthesis. The chain is Adenine phosphoribosyltransferase from Bordetella avium (strain 197N).